The primary structure comprises 210 residues: Cdc42 effector protein 2 (210 aa).

At serine 2 the chain carries N-acetylserine. The CRIB domain maps to 30–44 (ISPPLGDFRHTIHIG). A phosphoserine mark is found at serine 31, serine 101, and serine 141. Residues 124–145 (AQAPPKPPRLHLETPQASPQEA) form a disordered region.

It belongs to the BORG/CEP family. As to quaternary structure, interacts with CDC42 and RHOQ, in a GTP-dependent manner, and with SEPT7.

The protein localises to the endomembrane system. It is found in the cytoplasm. The protein resides in the cytoskeleton. Functionally, probably involved in the organization of the actin cytoskeleton. May act downstream of CDC42 to induce actin filament assembly leading to cell shape changes. Induces pseudopodia formation in fibroblasts in a CDC42-dependent manner. The polypeptide is Cdc42 effector protein 2 (CDC42EP2) (Bos taurus (Bovine)).